Consider the following 486-residue polypeptide: Protein ZINC INDUCED FACILITATOR 1 (486 aa).

Transmembrane regions (helical) follow at residues 41-61 (FVWI…PFLY), 82-102 (FVGC…GIVA), 109-129 (PIIL…GLSS), 131-151 (FWMA…LGTM), 170-190 (AVST…GFLA), 212-232 (ALPC…CCFI), 288-308 (IIVY…FALW), 327-347 (TVLA…YPLA), 362-384 (ALMI…SLSL), 391-408 (ILIN…LILQ), 423-443 (IAMT…GILF), and 461-481 (VFFV…KPFL).

Belongs to the major facilitator superfamily. In terms of tissue distribution, strongly expressed in developing leaves, differentiating zones of root tips and sepals of developing flowers. Restricted to vascular tissues in older leaves, mature roots, flowers, anthers and filaments. Not expressed in developing anthers.

The protein resides in the vacuole membrane. Major facilitator superfamily (MFS) transporter involved in zinc tolerance by participating in vacuolar sequestration of zinc. This Arabidopsis thaliana (Mouse-ear cress) protein is Protein ZINC INDUCED FACILITATOR 1 (ZIF1).